We begin with the raw amino-acid sequence, 270 residues long: Oxidized low-density lipoprotein receptor 1 (270 aa).

The span at 1–14 (MTVDDPKGMKDQLD) shows a compositional bias: basic and acidic residues. The interval 1 to 22 (MTVDDPKGMKDQLDQKPNGKTA) is disordered. The Cytoplasmic portion of the chain corresponds to 1–33 (MTVDDPKGMKDQLDQKPNGKTAKGFVSSWRWYP). Residues 34 to 56 (AAVTLGVLCLGLLVTVILLILQL) form a helical; Signal-anchor for type II membrane protein membrane-spanning segment. A lipid anchor (S-palmitoyl cysteine) is attached at Cys42. The segment at 57 to 146 (SQVSDLIKKQ…SGPCPQDWLW (90 aa)) is neck. The Extracellular portion of the chain corresponds to 57-270 (SQVSDLIKKQ…QKKANLLRAQ (214 aa)). N-linked (GlcNAc...) asparagine glycans are attached at residues Asn69 and Asn135. Residues 85–135 (RRSEKSAQESQKELKEMIETLAHKLDEKSKKLMELHRQNLNLQEVLKEAAN) are a coiled coil. 3 cysteine pairs are disulfide-bonded: Cys140–Cys151, Cys168–Cys260, and Cys239–Cys252. The C-type lectin domain maps to 147–261 (HEENCYQFSS…CILTAFSICQ (115 aa)).

In terms of assembly, homodimer; disulfide-linked. May form a hexamer composed of 3 homodimers. Interacts with HSP70. In terms of processing, N-glycosylated. Highly expressed in endothelial cells, aortic intima and lung. Expressed at low level in other tissues.

The protein resides in the cell membrane. The protein localises to the membrane raft. It localises to the secreted. Functionally, receptor that mediates the recognition, internalization and degradation of oxidatively modified low density lipoprotein (oxLDL) by vascular endothelial cells. OxLDL is a marker of atherosclerosis that induces vascular endothelial cell activation and dysfunction, resulting in pro-inflammatory responses, pro-oxidative conditions and apoptosis. Its association with oxLDL induces the activation of NF-kappa-B through an increased production of intracellular reactive oxygen and a variety of pro-atherogenic cellular responses including a reduction of nitric oxide (NO) release, monocyte adhesion and apoptosis. In addition to binding oxLDL, it acts as a receptor for the HSP70 protein involved in antigen cross-presentation to naive T-cells in dendritic cells, thereby participating in cell-mediated antigen cross-presentation. Also involved in inflammatory process, by acting as a leukocyte-adhesion molecule at the vascular interface in endotoxin-induced inflammation. Also acts as a receptor for advanced glycation end (AGE) products, activated platelets, monocytes, apoptotic cells and both Gram-negative and Gram-positive bacteria. This is Oxidized low-density lipoprotein receptor 1 (OLR1) from Bos taurus (Bovine).